Consider the following 175-residue polypeptide: ATP synthase subunit b 1 (175 aa).

The helical transmembrane segment at 26–48 (IINLAIIIGVLYVYGSKFIGNIL) threads the bilayer.

This sequence belongs to the ATPase B chain family. As to quaternary structure, F-type ATPases have 2 components, F(1) - the catalytic core - and F(0) - the membrane proton channel. F(1) has five subunits: alpha(3), beta(3), gamma(1), delta(1), epsilon(1). F(0) has four main subunits: a(1), b(1), b'(1) and c(10-14). The alpha and beta chains form an alternating ring which encloses part of the gamma chain. F(1) is attached to F(0) by a central stalk formed by the gamma and epsilon chains, while a peripheral stalk is formed by the delta, b and b' chains.

It localises to the cellular thylakoid membrane. In terms of biological role, f(1)F(0) ATP synthase produces ATP from ADP in the presence of a proton or sodium gradient. F-type ATPases consist of two structural domains, F(1) containing the extramembraneous catalytic core and F(0) containing the membrane proton channel, linked together by a central stalk and a peripheral stalk. During catalysis, ATP synthesis in the catalytic domain of F(1) is coupled via a rotary mechanism of the central stalk subunits to proton translocation. Its function is as follows. Component of the F(0) channel, it forms part of the peripheral stalk, linking F(1) to F(0). This is ATP synthase subunit b 1 from Picosynechococcus sp. (strain ATCC 27264 / PCC 7002 / PR-6) (Agmenellum quadruplicatum).